Consider the following 593-residue polypeptide: Scarecrow-like protein 1 (593 aa).

2 disordered regions span residues 29 to 61 (NPKL…PCLT) and 188 to 216 (YQNE…SKEV). Over residues 35–48 (LNENGNNNGVSSAQ) the composition is skewed to polar residues. The span at 202 to 211 (SSSADSNSHV) shows a compositional bias: low complexity. Residues 213–593 (SKEVVSQATP…KSLIVASAWR (381 aa)) form the GRAS domain. The interval 220-280 (ATPKQILISC…AARMAASGKF (61 aa)) is leucine repeat I (LRI). Positions 299–364 (MQVLFEVCPC…GKRPRLRLTG (66 aa)) are VHIID. Residues 330–334 (VHIID) carry the VHIID motif. A leucine repeat II (LRII) region spans residues 380-411 (IIGLRLEQLAEDNGVSFKFKAMPSKTSIVSPS). A PFYRE region spans residues 421 to 515 (LIVNFAFQLH…RQCLARDIVN (95 aa)). Positions 518-593 (ACEGEERIER…KSLIVASAWR (76 aa)) are SAW.

Belongs to the GRAS family. Expressed in seedlings, roots, shoots, leaves, flowers and siliques.

It is found in the nucleus. Its function is as follows. Probable transcription factor involved in plant development. This is Scarecrow-like protein 1 (SCL1) from Arabidopsis thaliana (Mouse-ear cress).